Consider the following 376-residue polypeptide: E3 ubiquitin-protein ligase RNF34 (376 aa).

An FYVE-type zinc finger spans residues 56 to 107 (EGPNIVCKACGLSFSVFRKKHVCCDCKKDFCSLCSVSQENLRRCSTCHLLQE). The region spanning 115–134 (LMRLKVKDLRQYLLLRNIPT) is the SAP 1 domain. Position 169 is a phosphoserine (serine 169). Residues 216–256 (IASANTDDDDDDDDDDDDDEDDDDEQEEEEQNPGLSKKKAR) form a disordered region. The segment covering 221–246 (TDDDDDDDDDDDDDEDDDDEQEEEEQ) has biased composition (acidic residues). A phosphoserine mark is found at serine 258 and serine 260. The SAP 2 domain maps to 268–282 (VEGMSVRQLKEILAR). The RING-type zinc finger occupies 329–364 (CRICMDAVIDCVLLECGHMVTCTKCGKRMSECPICR).

As to quaternary structure, interacts with CASP8 and CASP10. Interacts with p53/TP53; involved in p53/TP53 ubiquitination. Interacts (via RING-type zinc finger) with MDM2; the interaction stabilizes MDM2. Interacts (via RING-type zinc finger) with PPARGC1A. Interacts with NOD1. In terms of processing, autoubiquitinated (in vitro). Proteolytically cleaved by caspases upon induction of apoptosis by TNF.

It localises to the cell membrane. It is found in the endomembrane system. Its subcellular location is the nucleus. The protein resides in the nucleus speckle. The protein localises to the cytoplasm. It localises to the cytosol. The enzyme catalyses S-ubiquitinyl-[E2 ubiquitin-conjugating enzyme]-L-cysteine + [acceptor protein]-L-lysine = [E2 ubiquitin-conjugating enzyme]-L-cysteine + N(6)-ubiquitinyl-[acceptor protein]-L-lysine.. It participates in protein modification; protein ubiquitination. Its function is as follows. E3 ubiquitin-protein ligase that regulates several biological processes through the ubiquitin-mediated proteasomal degradation of various target proteins. Ubiquitinates the caspases CASP8 and CASP10, promoting their proteasomal degradation, to negatively regulate cell death downstream of death domain receptors in the extrinsic pathway of apoptosis. May mediate 'Lys-48'-linked polyubiquitination of RIPK1 and its subsequent proteasomal degradation thereby indirectly regulating the tumor necrosis factor-mediated signaling pathway. Negatively regulates p53/TP53 through its direct ubiquitination and targeting to proteasomal degradation. Indirectly, may also negatively regulate p53/TP53 through ubiquitination and degradation of SFN. Mediates PPARGC1A proteasomal degradation probably through ubiquitination thereby indirectly regulating the metabolism of brown fat cells. Possibly involved in innate immunity, through 'Lys-48'-linked polyubiquitination of NOD1 and its subsequent proteasomal degradation. This Mus musculus (Mouse) protein is E3 ubiquitin-protein ligase RNF34.